Reading from the N-terminus, the 346-residue chain is Ribonucleoside-diphosphate reductase subunit beta (346 aa).

Fe cation-binding residues include glutamate 89, glutamate 120, and histidine 123. Tyrosine 129 is an active-site residue. Residues glutamate 193, glutamate 227, and histidine 230 each contribute to the Fe cation site.

The protein belongs to the ribonucleoside diphosphate reductase small chain family. Tetramer of two alpha and two beta subunits. Fe cation is required as a cofactor.

The enzyme catalyses a 2'-deoxyribonucleoside 5'-diphosphate + [thioredoxin]-disulfide + H2O = a ribonucleoside 5'-diphosphate + [thioredoxin]-dithiol. Provides the precursors necessary for DNA synthesis. Catalyzes the biosynthesis of deoxyribonucleotides from the corresponding ribonucleotides. The sequence is that of Ribonucleoside-diphosphate reductase subunit beta (nrdB) from Chlamydia pneumoniae (Chlamydophila pneumoniae).